Reading from the N-terminus, the 878-residue chain is Alanine--tRNA ligase (878 aa).

4 residues coordinate Zn(2+): His566, His570, Cys668, and His672. A disordered region spans residues 846-866 (GGGRPDMAQAGGKQPEKLEEA).

Belongs to the class-II aminoacyl-tRNA synthetase family. Requires Zn(2+) as cofactor.

The protein localises to the cytoplasm. It catalyses the reaction tRNA(Ala) + L-alanine + ATP = L-alanyl-tRNA(Ala) + AMP + diphosphate. Functionally, catalyzes the attachment of alanine to tRNA(Ala) in a two-step reaction: alanine is first activated by ATP to form Ala-AMP and then transferred to the acceptor end of tRNA(Ala). Also edits incorrectly charged Ser-tRNA(Ala) and Gly-tRNA(Ala) via its editing domain. This chain is Alanine--tRNA ligase, found in Bacillus pumilus (strain SAFR-032).